A 248-amino-acid chain; its full sequence is Probable transcriptional regulatory protein RPA1097 (248 aa).

Residues 1–21 are disordered; that stretch reads MAGHSQFKNIMHRKGRQDAQR.

Belongs to the TACO1 family.

It is found in the cytoplasm. The polypeptide is Probable transcriptional regulatory protein RPA1097 (Rhodopseudomonas palustris (strain ATCC BAA-98 / CGA009)).